The following is a 143-amino-acid chain: Large ribosomal subunit protein uL11 (143 aa).

This sequence belongs to the universal ribosomal protein uL11 family. In terms of assembly, part of the ribosomal stalk of the 50S ribosomal subunit. Interacts with L10 and the large rRNA to form the base of the stalk. L10 forms an elongated spine to which L12 dimers bind in a sequential fashion forming a multimeric L10(L12)X complex. One or more lysine residues are methylated.

Functionally, forms part of the ribosomal stalk which helps the ribosome interact with GTP-bound translation factors. This is Large ribosomal subunit protein uL11 from Herminiimonas arsenicoxydans.